We begin with the raw amino-acid sequence, 413 residues long: 26S proteasome regulatory subunit 6B homolog (413 aa).

Residues 1-30 (MATAMVLDPKPAEKLPATRPETSITDVPSD) form a disordered region. The stretch at 32–80 (EDDLYARLKSLQRQLEFIEIQEEYVKDELKNLRREHLRAQEEVKRIQSV) forms a coiled coil. 201-208 (GPPGTGKT) contacts ATP.

The protein belongs to the AAA ATPase family.

It is found in the cytoplasm. It localises to the nucleus. The 26S proteasome is involved in the ATP-dependent degradation of ubiquitinated proteins. The regulatory (or ATPase) complex confers ATP dependency and substrate specificity to the 26S complex. The sequence is that of 26S proteasome regulatory subunit 6B homolog from Solanum tuberosum (Potato).